A 124-amino-acid chain; its full sequence is Darcynin homolog (124 aa).

It belongs to the darcynin family.

The chain is Darcynin homolog from Granulibacter bethesdensis (strain ATCC BAA-1260 / CGDNIH1).